The following is a 207-amino-acid chain: Small ribosomal subunit protein bS6c (207 aa).

The N-terminal 59 residues, Met1–Leu59, are a transit peptide targeting the chloroplast. The tract at residues Gly69–Gly99 is disordered. Residues Thr77–Thr86 show a composition bias toward low complexity.

The protein belongs to the bacterial ribosomal protein bS6 family. Part of the 30S ribosomal subunit.

The protein resides in the plastid. The protein localises to the chloroplast. Its function is as follows. Binds together with bS18 to 16S ribosomal RNA. In Arabidopsis thaliana (Mouse-ear cress), this protein is Small ribosomal subunit protein bS6c (RPS6).